An 892-amino-acid polypeptide reads, in one-letter code: DNA mismatch repair protein MutS (892 aa).

ATP is bound at residue 634–641 (GPNMGGKS).

Belongs to the DNA mismatch repair MutS family.

Its function is as follows. This protein is involved in the repair of mismatches in DNA. It is possible that it carries out the mismatch recognition step. This protein has a weak ATPase activity. The sequence is that of DNA mismatch repair protein MutS from Paraburkholderia phymatum (strain DSM 17167 / CIP 108236 / LMG 21445 / STM815) (Burkholderia phymatum).